A 130-amino-acid chain; its full sequence is Small ribosomal subunit protein uS8 (130 aa).

Belongs to the universal ribosomal protein uS8 family. In terms of assembly, part of the 30S ribosomal subunit.

In terms of biological role, one of the primary rRNA binding proteins, it binds directly to 16S rRNA central domain where it helps coordinate assembly of the platform of the 30S subunit. This is Small ribosomal subunit protein uS8 from Methanococcus maripaludis (strain C5 / ATCC BAA-1333).